A 118-amino-acid chain; its full sequence is Small ribosomal subunit protein uS13 (118 aa).

The tract at residues K93–K118 is disordered.

It belongs to the universal ribosomal protein uS13 family. As to quaternary structure, part of the 30S ribosomal subunit. Forms a loose heterodimer with protein S19. Forms two bridges to the 50S subunit in the 70S ribosome.

In terms of biological role, located at the top of the head of the 30S subunit, it contacts several helices of the 16S rRNA. In the 70S ribosome it contacts the 23S rRNA (bridge B1a) and protein L5 of the 50S subunit (bridge B1b), connecting the 2 subunits; these bridges are implicated in subunit movement. Contacts the tRNAs in the A and P-sites. In Buchnera aphidicola subsp. Baizongia pistaciae (strain Bp), this protein is Small ribosomal subunit protein uS13.